The primary structure comprises 275 residues: Putative replication protein (275 aa).

Positions 98–198 constitute a BRCT domain; sequence SKAICFTPYD…RILKISEDYF (101 aa).

The polypeptide is Putative replication protein (Wigglesworthia glossinidia brevipalpis).